The sequence spans 57 residues: Large ribosomal subunit protein bL32 (57 aa).

The span at 1-20 (MAVPKKKTSKTKRDQRKANW) shows a compositional bias: basic residues. The disordered stretch occupies residues 1 to 21 (MAVPKKKTSKTKRDQRKANWK).

Belongs to the bacterial ribosomal protein bL32 family.

In Rippkaea orientalis (strain PCC 8801 / RF-1) (Cyanothece sp. (strain PCC 8801)), this protein is Large ribosomal subunit protein bL32.